The primary structure comprises 261 residues: Thiazole synthase (261 aa).

The active-site Schiff-base intermediate with DXP is Lys-97. 1-deoxy-D-xylulose 5-phosphate-binding positions include Gly-158, 184 to 185 (AG), and 206 to 207 (AS).

Belongs to the ThiG family. As to quaternary structure, homotetramer. Forms heterodimers with either ThiH or ThiS.

It is found in the cytoplasm. It catalyses the reaction [ThiS sulfur-carrier protein]-C-terminal-Gly-aminoethanethioate + 2-iminoacetate + 1-deoxy-D-xylulose 5-phosphate = [ThiS sulfur-carrier protein]-C-terminal Gly-Gly + 2-[(2R,5Z)-2-carboxy-4-methylthiazol-5(2H)-ylidene]ethyl phosphate + 2 H2O + H(+). The protein operates within cofactor biosynthesis; thiamine diphosphate biosynthesis. Catalyzes the rearrangement of 1-deoxy-D-xylulose 5-phosphate (DXP) to produce the thiazole phosphate moiety of thiamine. Sulfur is provided by the thiocarboxylate moiety of the carrier protein ThiS. In vitro, sulfur can be provided by H(2)S. This Corynebacterium diphtheriae (strain ATCC 700971 / NCTC 13129 / Biotype gravis) protein is Thiazole synthase.